The chain runs to 547 residues: Mucin-13 (547 aa).

Residues methionine 1–serine 210 are compositionally biased toward low complexity. The disordered stretch occupies residues methionine 1 to proline 218. The 40-residue stretch at serine 210–valine 249 folds into the EGF-like 1 domain. Intrachain disulfides connect cysteine 214–cysteine 225, cysteine 219–cysteine 234, and cysteine 236–cysteine 248. Residues asparagine 243, asparagine 244, and asparagine 263 are each glycosylated (N-linked (GlcNAc...) asparagine). In terms of domain architecture, SEA spans lysine 250–aspartate 366. 2 EGF-like domains span residues glutamine 361 to valine 401 and valine 401 to glutamate 441. Cystine bridges form between cysteine 365-cysteine 378, cysteine 370-cysteine 384, cysteine 386-cysteine 400, cysteine 409-cysteine 427, and cysteine 429-cysteine 440. A helical transmembrane segment spans residues isoleucine 459–isoleucine 479. The Cytoplasmic portion of the chain corresponds to valine 480–tyrosine 547. A disordered region spans residues lysine 525–tyrosine 547.

As to quaternary structure, homodimer of beta subunits. Cleaved into two subunits, alpha and beta, probably between the first EGF domain and the SEA domain. Beta subunit contains the cytoplasmic tail and alpha subunit the extracellular tail. The homooligomerization into dimers is dependent on intrachain disulfide bonds. Post-translationally, highly glycosylated.

The protein localises to the cell membrane. It is found in the secreted. In terms of biological role, epithelial and hemopoietic transmembrane mucin that may play a role in cell signaling. The chain is Mucin-13 (Muc13) from Rattus norvegicus (Rat).